Consider the following 986-residue polypeptide: MTTTTTTRLLLAAILLAVAAADDDGQTLLEIKKSFRNVDNVLYDWAGDGAPRRYCSWRGVLCDNVTFAVAALNLSGLNLGGEISPAIGNLKSVESIDLKSNELSGQIPDEIGDCTSLKTLDLSSNNLGGDIPFSISKLKHLENLILKNNQLVGMIPSTLSQLPNLKILDLAQNKLNGEIPRLIYWNEVLQYLGLRSNNLEGSLSPEMCQLTGLWYFDVKNNSLTGIIPDTIGNCTSFQVLDLSYNRLTGEIPFNIGFLQVATLSLQGNNFSGPIPSVIGLMQALAVLDLSFNQLSGPIPSILGNLTYTEKLYLQGNRLTGSIPPELGNMSTLHYLELNDNQLTGFIPPELGKLTGLFDLNLANNNLEGPIPDNISSCMNLISFNAYGNKLNGTVPRSLHKLESITYLNLSSNYLSGAIPIELAKMKNLDTLDLSCNMVAGPIPSAIGSLEHLLRLNFSNNNLVGYIPAEFGNLRSIMEIDLSSNHLGGLIPQEVGMLQNLILLKLESNNITGDVSSLINCFSLNVLNVSYNNLAGIVPTDNNFSRFSPDSFLGNPGLCGYWLGSSCYSTSHVQRSSVSRSAILGIAVAGLVILLMILAAACWPHWAQVPKDVSLCKPDIHALPSSNVPPKLVILHMNMAFLVYEDIMRMTENLSEKYIIGYGASSTVYKCVLKNCKPVAIKKLYAHYPQSLKEFETELETVGSIKHRNLVSLQGYSLSPAGNLLFYDYLENGSLWDVLHAGSSKKQKLDWEARLRIALGAAQGLAYLHHDCNPRIIHRDVKSKNILLDKDYEAHLADFGIAKSLCTSKTHTSTYVMGTIGYIDPEYACTSRLNEKSDVYSYGIVLLELLTGKKPVDNECNLHHLILSKAADNTVMEMVDPDIADTCKDLGEVKKVFQLALLCSKRQPSDRPTMHEVVRVLDCLVYPDPPSKPALPPALPQSSTVPSYVNEYVSLRGGSTLSCENSSSASDAELFLKFGEVISQNTE.

The first 21 residues, 1-21 (MTTTTTTRLLLAAILLAVAAA), serve as a signal peptide directing secretion. The Extracellular portion of the chain corresponds to 22–581 (DDDGQTLLEI…VQRSSVSRSA (560 aa)). 2 N-linked (GlcNAc...) asparagine glycosylation sites follow: Asn64 and Asn73. LRR repeat units lie at residues 68-89 (AVAA…AIGN), 90-114 (LKSV…IGDC), 116-138 (SLKT…ISKL), 139-161 (KHLE…TLSQ), 162-186 (LPNL…IYWN), 188-210 (VLQY…MCQL), 211-233 (TGLW…TIGN), 234-259 (CTSF…GFLQ), 261-280 (ATLS…VIGL), 281-304 (MQAL…ILGN), 306-329 (TYTE…LGNM), 330-352 (STLH…ELGK), 354-377 (TGLF…ISSC), 379-401 (NLIS…LHKL), 402-425 (ESIT…LAKM), 427-449 (NLDT…IGSL), 450-472 (EHLL…EFGN), 473-498 (LRSI…GMLQ), 500-520 (LILL…LINC), and 521-545 (FSLN…NFSR). Asn220 and Asn233 each carry an N-linked (GlcNAc...) asparagine glycan. N-linked (GlcNAc...) asparagine glycans are attached at residues Asn269, Asn304, and Asn328. N-linked (GlcNAc...) asparagine glycans are attached at residues Asn373, Asn391, and Asn408. Residue Asn456 is glycosylated (N-linked (GlcNAc...) asparagine). Residues Asn509, Asn527, and Asn542 are each glycosylated (N-linked (GlcNAc...) asparagine). The chain crosses the membrane as a helical span at residues 582–602 (ILGIAVAGLVILLMILAAACW). The Cytoplasmic portion of the chain corresponds to 603–986 (PHWAQVPKDV…FGEVISQNTE (384 aa)). The region spanning 653-934 (LSEKYIIGYG…YPDPPSKPAL (282 aa)) is the Protein kinase domain. ATP contacts are provided by residues 659–667 (IGYGASSTV) and Lys681. Residue Asp779 is the Proton acceptor of the active site.

The protein belongs to the protein kinase superfamily. Ser/Thr protein kinase family.

It localises to the cell membrane. The catalysed reaction is L-seryl-[protein] + ATP = O-phospho-L-seryl-[protein] + ADP + H(+). The enzyme catalyses L-threonyl-[protein] + ATP = O-phospho-L-threonyl-[protein] + ADP + H(+). Its function is as follows. Receptor kinase that may be involved in the regulation of cell proliferation and cell growth. In Oryza sativa subsp. japonica (Rice), this protein is LRR receptor-like serine/threonine-protein kinase ER2.